Reading from the N-terminus, the 354-residue chain is Probable L-ascorbate-6-phosphate lactonase UlaG (354 aa).

It belongs to the UlaG family. It depends on a divalent metal cation as a cofactor.

It localises to the cytoplasm. It carries out the reaction L-ascorbate 6-phosphate + H2O = 3-dehydro-L-gulonate 6-phosphate. It functions in the pathway cofactor degradation; L-ascorbate degradation; D-xylulose 5-phosphate from L-ascorbate: step 1/4. Functionally, probably catalyzes the hydrolysis of L-ascorbate-6-P into 3-keto-L-gulonate-6-P. Is essential for L-ascorbate utilization under anaerobic conditions. The polypeptide is Probable L-ascorbate-6-phosphate lactonase UlaG (Escherichia coli (strain SMS-3-5 / SECEC)).